A 592-amino-acid polypeptide reads, in one-letter code: Guanylate-binding protein 1 (592 aa).

The interval 1-311 (MASEIHMTGP…NAISSGDLPC (311 aa)) is GTPase domain (Globular). Residues 35–278 (TQPMVVVAIV…FCSYIFSNSK (244 aa)) enclose the GB1/RHD3-type G domain. GTP-binding positions include 45 to 52 (GLYRTGKS), 67 to 69 (LGS), and 97 to 101 (DTEGL). A Phosphoserine; by PIM1 modification is found at Ser-156. (Microbial infection) Glycyl lysine isopeptide (Lys-Gly) (interchain with G-Cter in ubiquitin) cross-links involve residues Lys-207, Lys-209, Lys-210, Lys-382, Lys-562, Lys-567, Lys-573, and Lys-587. Residue Cys-589 is modified to Cysteine methyl ester. Cys-589 carries S-farnesyl cysteine lipidation. A Phosphothreonine; by PIM1 modification is found at Thr-590. Positions 590–592 (TIS) are cleaved as a propeptide — removed in mature form.

This sequence belongs to the TRAFAC class dynamin-like GTPase superfamily. GB1/RHD3 GTPase family. GB1 subfamily. Homodimer; homodimerization occurs upon GTP-binding and is required for the second hydrolysis step from GDP to GMP. Undergoes conformational changes and oligomerization upon GTP-binding and hydrolysis. Heterodimer with other family members, including GBP2, GBP3, GBP4 and GBP5. Dimerization regulates subcellular location to membranous structures. Interacts with SQSTM1. Interacts (when phosphorylated) with 14-3-3 protein sigma (SFN); leading to GBP1 retention in the cytosol and inactivation. Post-translationally, isoprenylation is required for proper subcellular location. Phosphorylated at Ser-156 by PIM1 in absence of infection, inhibits GBP1: phosphorylation promotes interaction with 14-3-3 protein sigma (SFN), leading to GBP1 retention in the cytosol. Dephosphorylated in response to infection, liberating GBP1. In terms of processing, (Microbial infection) Ubiquitinated by S.flexneri IpaH9.8, leading to its degradation by the proteasome, thereby preventing its ability to promote host defense against bacterial infection.

It localises to the cytoplasmic vesicle membrane. The protein localises to the golgi apparatus membrane. Its subcellular location is the cell membrane. The protein resides in the cytoplasm. It is found in the cytosol. It localises to the secreted. It catalyses the reaction GTP + H2O = GDP + phosphate + H(+). The enzyme catalyses GDP + H2O = GMP + phosphate + H(+). Interferon (IFN)-inducible GTPase that plays important roles in innate immunity against a diverse range of bacterial, viral and protozoan pathogens. Hydrolyzes GTP to GMP in two consecutive cleavage reactions: GTP is first hydrolyzed to GDP and then to GMP in a processive manner. Following infection, recruited to the pathogen-containing vacuoles or vacuole-escaped bacteria and promotes both inflammasome assembly and autophagy. Acts as a positive regulator of inflammasome assembly by facilitating the detection of inflammasome ligands from pathogens. Involved in the lysis of pathogen-containing vacuoles, releasing pathogens into the cytosol. Following pathogen release in the cytosol, forms a protein coat in a GTPase-dependent manner that encapsulates pathogens and promotes the detection of ligands by pattern recognition receptors. Plays a key role in inflammasome assembly in response to infection by Gram-negative bacteria: following pathogen release in the cytosol, forms a protein coat that encapsulates Gram-negative bacteria and directly binds to lipopolysaccharide (LPS), disrupting the O-antigen barrier and unmasking lipid A that is that detected by the non-canonical inflammasome effector CASP4/CASP11. Also promotes recruitment of proteins that mediate bacterial cytolysis, leading to release double-stranded DNA (dsDNA) that activates the AIM2 inflammasome. Involved in autophagy by regulating bacteriolytic peptide generation via its interaction with ubiquitin-binding protein SQSTM1, which delivers monoubiquitinated proteins to autolysosomes for the generation of bacteriolytic peptides. Confers protection to several pathogens, including the bacterial pathogens L.monocytogenes and M.bovis BCG as well as the protozoan pathogen T.gondii. Exhibits antiviral activity against influenza virus. This Homo sapiens (Human) protein is Guanylate-binding protein 1.